The primary structure comprises 377 residues: GTP 3',8-cyclase (377 aa).

The disordered stretch occupies residues 1–29 (MTTRLYLSPTPPRNDREGASKSTSASIKH). The Radical SAM core domain maps to 45–271 (RFGRIARDLR…FTLSPAKEPR (227 aa)). A GTP-binding site is contributed by Arg-54. Residues Cys-61 and Cys-65 each contribute to the [4Fe-4S] cluster site. Tyr-67 lines the S-adenosyl-L-methionine pocket. Cys-68 lines the [4Fe-4S] cluster pocket. Position 105 (Arg-105) interacts with GTP. Gly-109 contacts S-adenosyl-L-methionine. A GTP-binding site is contributed by Thr-140. Residue Ser-164 participates in S-adenosyl-L-methionine binding. Residue Lys-201 coordinates GTP. Met-235 is an S-adenosyl-L-methionine binding site. 2 residues coordinate [4Fe-4S] cluster: Cys-304 and Cys-307. 309 to 311 (RSR) contacts GTP. Cys-321 contacts [4Fe-4S] cluster.

It belongs to the radical SAM superfamily. MoaA family. Monomer and homodimer. It depends on [4Fe-4S] cluster as a cofactor.

The enzyme catalyses GTP + AH2 + S-adenosyl-L-methionine = (8S)-3',8-cyclo-7,8-dihydroguanosine 5'-triphosphate + 5'-deoxyadenosine + L-methionine + A + H(+). It participates in cofactor biosynthesis; molybdopterin biosynthesis. In terms of biological role, catalyzes the cyclization of GTP to (8S)-3',8-cyclo-7,8-dihydroguanosine 5'-triphosphate. The protein is GTP 3',8-cyclase of Corynebacterium glutamicum (strain ATCC 13032 / DSM 20300 / JCM 1318 / BCRC 11384 / CCUG 27702 / LMG 3730 / NBRC 12168 / NCIMB 10025 / NRRL B-2784 / 534).